The primary structure comprises 200 residues: Elongation factor Ts (200 aa).

Residues 83-86 are involved in Mg(2+) ion dislocation from EF-Tu; it reads TDFA.

The protein belongs to the EF-Ts family.

It is found in the cytoplasm. Associates with the EF-Tu.GDP complex and induces the exchange of GDP to GTP. It remains bound to the aminoacyl-tRNA.EF-Tu.GTP complex up to the GTP hydrolysis stage on the ribosome. The protein is Elongation factor Ts of Syntrophobacter fumaroxidans (strain DSM 10017 / MPOB).